Reading from the N-terminus, the 126-residue chain is Small ribosomal subunit protein bS6 (126 aa).

Residues 101–126 form a disordered region; the sequence is VMMKAKEERTAKREDAAPRAEEAAAE. A compositionally biased stretch (basic and acidic residues) spans 104–126; that stretch reads KAKEERTAKREDAAPRAEEAAAE.

The protein belongs to the bacterial ribosomal protein bS6 family.

Functionally, binds together with bS18 to 16S ribosomal RNA. The chain is Small ribosomal subunit protein bS6 from Aliivibrio salmonicida (strain LFI1238) (Vibrio salmonicida (strain LFI1238)).